Here is a 118-residue protein sequence, read N- to C-terminus: Protein TusC (118 aa).

This sequence belongs to the DsrF/TusC family. Heterohexamer, formed by a dimer of trimers. The hexameric TusBCD complex contains 2 copies each of TusB, TusC and TusD. The TusBCD complex interacts with TusE.

It is found in the cytoplasm. In terms of biological role, part of a sulfur-relay system required for 2-thiolation of 5-methylaminomethyl-2-thiouridine (mnm(5)s(2)U) at tRNA wobble positions. The chain is Protein TusC from Salmonella typhimurium (strain LT2 / SGSC1412 / ATCC 700720).